We begin with the raw amino-acid sequence, 398 residues long: uncharacterized protein (398 aa).

The signal sequence occupies residues 1 to 22 (MKLKFYKLPLITTAFSFVFLTA). A lipid anchor (N-palmitoyl cysteine) is attached at Cys23. A lipid anchor (S-diacylglycerol cysteine) is attached at Cys23.

It is found in the cell membrane. This is an uncharacterized protein from Mycoplasma genitalium (strain ATCC 33530 / DSM 19775 / NCTC 10195 / G37) (Mycoplasmoides genitalium).